We begin with the raw amino-acid sequence, 317 residues long: Ventral anterior homeobox 1 (317 aa).

Residues 1–62 form a disordered region; sequence MEVRYSQDSE…CEKSRASSGD (62 aa). A compositionally biased stretch (basic and acidic residues) spans 18–27; the sequence is GLKEGKEGKD. The segment at residues 92 to 151 is a DNA-binding region (homeobox); sequence PKRTRTSFTAEQLYRLEMEFQRCQYVVGRERTELARQLNLSETQVKVWFQNRRTKQKKDQ. The tract at residues 203-248 is disordered; the sequence is GPSLGITANGGSSSSSRSSAGSSGTAGGSPPLPTVTSSGTVTGLQG. Residues 212 to 225 show a composition bias toward low complexity; sequence GGSSSSSRSSAGSS. Positions 236-247 are enriched in polar residues; the sequence is TVTSSGTVTGLQ.

It belongs to the EMX homeobox family. As to expression, expressed in the anterior neural keel and later in the preoptic area and optic stalk.

It is found in the nucleus. Functionally, transcription factor that is required for closure of the choroid fissure and together with Vax2 is required for optic nerve differentiation and to limit retinal development to the optic cup. This chain is Ventral anterior homeobox 1 (vax1), found in Danio rerio (Zebrafish).